The following is a 1011-amino-acid chain: DNA-directed RNA polymerase subunit beta'' (1011 aa).

Zn(2+)-binding residues include C216, C282, C288, and C291.

The protein belongs to the RNA polymerase beta' chain family. RpoC2 subfamily. In terms of assembly, in plastids the minimal PEP RNA polymerase catalytic core is composed of four subunits: alpha, beta, beta', and beta''. When a (nuclear-encoded) sigma factor is associated with the core the holoenzyme is formed, which can initiate transcription. The cofactor is Zn(2+).

Its subcellular location is the plastid. The protein localises to the chloroplast. The catalysed reaction is RNA(n) + a ribonucleoside 5'-triphosphate = RNA(n+1) + diphosphate. Functionally, DNA-dependent RNA polymerase catalyzes the transcription of DNA into RNA using the four ribonucleoside triphosphates as substrates. This chain is DNA-directed RNA polymerase subunit beta'', found in Ostreococcus tauri.